The following is a 577-amino-acid chain: Jasmonoyl--L-amino acid synthetase JAR4 (577 aa).

S99 provides a ligand contact to ATP. Residue S102 participates in jasmonate binding. ATP contacts are provided by residues M119, T122, G163, N168, and 331–336 (GSSEGW). Position 166–170 (166–170 (TTNVY)) interacts with an L-alpha-amino acid. 328 to 331 (ADYG) provides a ligand contact to jasmonate. 531–535 (KILDH) lines the an L-alpha-amino acid pocket.

Belongs to the IAA-amido conjugating enzyme family.

It catalyses the reaction a jasmonate + an L-alpha-amino acid + ATP = a jasmonyl-L-amino acid + AMP + diphosphate + H(+). Its function is as follows. Catalyzes the synthesis of jasmonate-amino acid conjugates by adenylation. Catalyzes the conjugation of jasmonate (JA) to Ile, Leu and Val. Catalyzes the conjugation of jasmonate (JA) to Ile to mediate defense signaling and resistance to the herbivore Manduca sexta caterpillars. The sequence is that of Jasmonoyl--L-amino acid synthetase JAR4 from Nicotiana attenuata (Coyote tobacco).